A 164-amino-acid polypeptide reads, in one-letter code: Transcriptional regulator MraZ (164 aa).

2 SpoVT-AbrB domains span residues 7–60 (HFTN…EIDE) and 83–126 (SEIL…EPGR). The tract at residues 141–164 (LRKQLSSRPVAPDAQPPRPHGARE) is disordered. A compositionally biased stretch (pro residues) spans 154-164 (AQPPRPHGARE).

It belongs to the MraZ family. Forms oligomers.

The protein localises to the cytoplasm. The protein resides in the nucleoid. In Beijerinckia indica subsp. indica (strain ATCC 9039 / DSM 1715 / NCIMB 8712), this protein is Transcriptional regulator MraZ.